The sequence spans 130 residues: MGKDKKASGSGSGSKGGKDAGNKDAGKDAGKASKGAQSINVRHILCEKHGKKEEALAKIRDGADFGAVAREYSEDKARTGGSLGWKQKGTLDPEFEKVAFALETSSTSSPKIGEVKTQFGYHIIMVEGKK.

Residues 1-38 (MGKDKKASGSGSGSKGGKDAGNKDAGKDAGKASKGAQS) are disordered. The span at 16 to 31 (GGKDAGNKDAGKDAGK) shows a compositional bias: basic and acidic residues. The 93-residue stretch at 36-128 (AQSINVRHIL…FGYHIIMVEG (93 aa)) folds into the PpiC domain.

This sequence belongs to the PpiC/parvulin rotamase family. PIN4 subfamily.

It catalyses the reaction [protein]-peptidylproline (omega=180) = [protein]-peptidylproline (omega=0). Its function is as follows. PPIases accelerate the folding of proteins. It catalyzes the cis-trans isomerization of proline imidic peptide bonds in oligopeptides. The sequence is that of Peptidyl-prolyl cis-trans isomerase pin4 (ppi-5) from Neurospora crassa (strain ATCC 24698 / 74-OR23-1A / CBS 708.71 / DSM 1257 / FGSC 987).